We begin with the raw amino-acid sequence, 376 residues long: Transcription initiation factor IIA subunit 1 (376 aa).

Alanine 2 carries the post-translational modification N-acetylalanine. Composition is skewed to low complexity over residues 69–79 (QVQQQHQPQQQ) and 89–105 (QAQPQQTVPQQAQTQQV). Disordered regions lie at residues 69 to 107 (QVQQQHQPQQQQHHHHHHHQQAQPQQTVPQQAQTQQVLI), 246 to 265 (AQAQITATGHQQPQAQPAQT), and 274 to 329 (DGTG…QELF). Phosphoserine; by TAF1 occurs at positions 280, 281, 316, and 321. Positions 280–329 (SSEEDEDEEEDYDDDEEEDKEKDGAEDGQVEEEPLNSEDDVSDEEGQELF) are enriched in acidic residues. The DNA site is built by histidine 343 and arginine 344.

The protein belongs to the TFIIA subunit 1 family. TFIIA is a heterodimer of the large unprocessed subunit 1 and a small subunit gamma. It was originally believed to be a heterotrimer of an alpha (p35), a beta (p19) and a gamma subunit (p12). TFIIA forms a complex with TBP. Part of TBP-based Pol II pre-initiation complex (PIC), in which Pol II core assembles with general transcription factors and other specific initiation factors including GTF2E1, GTF2E2, GTF2F1, GTF2F2, TCEA1, ERCC2, ERCC3, GTF2H2, GTF2H3, GTF2H4, GTF2H5, GTF2A1, GTF2A2, GTF2B and TBP; this large multi-subunit PIC complex mediates DNA unwinding and targets Pol II core to the transcription start site where the first phosphodiester bond forms. In terms of processing, the alpha and beta subunits are postranslationally produced from the precursor formby TASP1. The cleavage promotes proteasomal degradation.

Its subcellular location is the nucleus. Functionally, TFIIA is a component of the transcription machinery of RNA polymerase II and plays an important role in transcriptional activation. TFIIA in a complex with TBP mediates transcriptional activity. The chain is Transcription initiation factor IIA subunit 1 (GTF2A1) from Pongo abelii (Sumatran orangutan).